The following is an 87-amino-acid chain: Small ribosomal subunit protein bS16 (87 aa).

Belongs to the bacterial ribosomal protein bS16 family.

The sequence is that of Small ribosomal subunit protein bS16 from Buchnera aphidicola subsp. Baizongia pistaciae (strain Bp).